The following is a 716-amino-acid chain: MDGYQNFLPIPPENNTWLLLLDDFSQLQQQQQQQQQQQQQQQQQQQQQQQQQQQQQQQQQQQQQQQQQQQQQFPQQYTNDGINVQSIESNNYLNNNNFNFNERLESLQKQQQEQQTQIQQQLQNYQQQYQDQYQQRQQQYQDQYQKPYELPSQYIDQCNQIFSNYNNNNNITSINYNMNNNNNSNNSNNNSNNNNNNNNNNNNNNNNNNNNNNNNNNNNNNNNNNKTTDNINNVNSINNLNNINLGANNVNNNVNSNVVSNVNNNAISQNKPIFPPFNDNPINIQQQQQQQQQQECYKIPQYKISLDNTNNPIITPTITPTLTTFPTITPTLITPTTIAPITPTPTPTPILTTTTTKTTKINLEETNEKTKIINETKKQEKSTESIKKMNQNKASRNYRQKKKDYIKEIEDKLSLLEMENSKIQKENQTLRKTGSVDLMKPSNDIMKMMTDCKTITNQLKLSLERNDDRSLIYLLHQYHRVIEERYSHIEYEAEKVANPYVQLRLSIVGYTPGQFCPFVLNIFNDNNDDGDNQKVTNDHNWYNTFKKEANITPEQSNKLDSIRFQHTKVSASMFKEIQMLDLEIKSFFYKFIFSYPSDPLSSLNPTELVYNSTTTTPIDSYSLPAIDKQLELAGKLESLKNKLTLNGGLMLDTFSSISSLLTPRQEAIFLVGVDPYAFINFSHFDIINDVWSNIINKPFSGPVHMAQSLNKMFNHS.

The stretch at 20–142 (LLDDFSQLQQ…YQQRQQQYQD (123 aa)) forms a coiled coil. Positions 173–233 (SINYNMNNNN…NNKTTDNINN (61 aa)) are disordered. The region spanning 381 to 444 (KSTESIKKMN…SVDLMKPSND (64 aa)) is the bZIP domain. The tract at residues 387-403 (KKMNQNKASRNYRQKKK) is basic motif. Positions 406–413 (IKEIEDKL) are leucine-zipper.

The protein belongs to the bZIP family.

The protein localises to the nucleus. In terms of biological role, probable transcriptional regulator. The protein is Probable basic-leucine zipper transcription factor O (bzpO) of Dictyostelium discoideum (Social amoeba).